A 132-amino-acid polypeptide reads, in one-letter code: Small ribosomal subunit protein uS8 (132 aa).

The protein belongs to the universal ribosomal protein uS8 family. As to quaternary structure, part of the 30S ribosomal subunit. Contacts proteins S5 and S12.

Its function is as follows. One of the primary rRNA binding proteins, it binds directly to 16S rRNA central domain where it helps coordinate assembly of the platform of the 30S subunit. This Clostridium beijerinckii (strain ATCC 51743 / NCIMB 8052) (Clostridium acetobutylicum) protein is Small ribosomal subunit protein uS8.